We begin with the raw amino-acid sequence, 1140 residues long: Envelopment polyprotein (1140 aa).

Residues 1 to 17 form the signal peptide; sequence MVGWVCISLVVLATTTA. Residues 18–489 lie on the Lumenal side of the membrane; it reads GLTRNLYELK…VPGLHGWATT (472 aa). Cystine bridges form between C30–C155, C64–C161, C113–C132, C137–C142, C179–C189, and C214–C251. N138 is a glycosylation site (N-linked (GlcNAc...) asparagine; by host). N351 carries an N-linked (GlcNAc...) asparagine; by host glycan. Disulfide bonds link C380–C439, C384–C393, C409–C428, and C456–C479. Residue N403 is glycosylated (N-linked (GlcNAc...) asparagine; by host). The chain crosses the membrane as a helical span at residues 490–510; sequence ALLITFCFGWLLIPTITMIIL. Residues 511–631 lie on the Cytoplasmic side of the membrane; that stretch reads KILRLLTFSC…LGVFRYKSRC (121 aa). The tract at residues 520-537 is binding to the ribonucleoprotein; sequence CSHYSTESKFKAILERVK. 2 CCHC-type zinc fingers span residues 549 to 569 and 574 to 595; these read CDVC…KKSC and CPYC…FSIC. Binding to the ribonucleoprotein stretches follow at residues 592-609, 596-607, and 615-629; these read FSIC…KKSL, KLTNRFQENLKK, and KQGC…RYKS. The interaction with host TRAF3 stretch occupies residues 611-638; sequence RPEVKQGCYRTLGVFRYKSRCYVGLVWG. The ITAM domain occupies 615 to 638; sequence KQGCYRTLGVFRYKSRCYVGLVWG. Residues Y619 and Y632 each carry the phosphotyrosine; by host modification. The YxxL motif lies at 619-622; that stretch reads YRTL. A helical membrane pass occupies residues 632-652; sequence YVGLVWGVLLTTELIVWAASA. Residues 653–1108 are Lumenal-facing; the sequence is DTPLMESGWS…EWLLGILNGN (456 aa). Cystine bridges form between C739/C774, C743/C781, C755/C888, C769/C899, C784/C907, C810/C819, C827/C836, and C867/C871. The interval 761–781 is fusion loop; the sequence is YQYETSWGCNPPDCPGVGTGC. N931 carries an N-linked (GlcNAc...) asparagine; by host glycan. 5 disulfide bridges follow: C973-C1003, C996-C1048, C1013-C1018, C1049-C1054, and C1088-C1092. A helical transmembrane segment spans residues 1109–1129; the sequence is WVVVAVLIVILILSILLFSFF. Residues 1125–1140 are binding to the ribonucleoprotein; that stretch reads LFSFFCPIRGRKNKSN. The Cytoplasmic portion of the chain corresponds to 1130–1140; that stretch reads CPIRGRKNKSN.

Belongs to the hantavirus envelope glycoprotein family. As to quaternary structure, homodimer. Homotetramer; forms heterotetrameric Gn-Gc spikes in the pre-fusion conformation. Interacts (via C-terminus) with the nucleoprotein. Interacts with host TUFM; this interaction contributes to the virus-induced degradation of mitochondria by autophagy, which leads to degradation of host MAVS and inhibition of type I interferon (IFN) responses. Interacts with host MAP1LC3B; this interaction contributes to the virus-induced degradation of mitochondria by autophagy, which leads to degradation of host MAVS and inhibition of type I interferon (IFN) responses. Interacts (via C-terminus) with host TRAF3 (via N-terminus); this interaction inhibits the formation of TRAF3-TBK1 complexes. Homodimer. Homotetramer; forms heterotetrameric Gn-Gc spikes in the pre-fusion conformation. Homotrimer; forms homotrimer in the post-fusion conformation at acidic pH. Interacts (via C-terminus) with the nucleoprotein. Envelope polyprotein precursor is quickly cleaved in vivo just after synthesis, presumably by host signal peptidase.

It localises to the virion membrane. Its subcellular location is the host cell surface. It is found in the host Golgi apparatus membrane. The protein localises to the host endoplasmic reticulum membrane. The protein resides in the host mitochondrion. Functionally, forms homotetramers with glycoprotein C at the surface of the virion. Attaches the virion to host cell receptors including integrin ITGAV/ITGB3. This attachment induces virion internalization predominantly through clathrin-dependent endocytosis. Mediates the assembly and budding of infectious virus particles through its interaction with the nucleocapsid protein and the viral genome. May dysregulate normal immune and endothelial cell responses through an ITAM motif. Translocates to mitochondria, binds to host TUFM and recruits MAP1LC3B. These interactions induce mitochondrial autophagy and therefore destruction of host MAVS leading to inhibition of type I interferon (IFN) responses. Concomitant breakdown of glycoprotein N is apparently prevented by the nucleoprotein that may inhibit Gn-stimulated autophagosome-lysosome fusion. Interacts with the viral genomic RNA. Inhibits the host RIG-I/TBK1 pathway by disrupting the formation of TBK1-TRAF3 complexes and downstream signaling responses required for IFN-beta transcription. Its function is as follows. Forms homotetramers with glycoprotein N at the surface of the virion. Attaches the virion to host cell receptors including integrin ITGAV/ITGB3. This attachment induces virion internalization predominantly through clathrin-dependent endocytosis. Class II fusion protein that promotes fusion of viral membrane with host endosomal membrane after endocytosis of the virion. In Homo sapiens (Human), this protein is Envelopment polyprotein (GP).